Here is a 442-residue protein sequence, read N- to C-terminus: UDP-N-acetylmuramoylalanine--D-glutamate ligase (442 aa).

An ATP-binding site is contributed by 115–121 (GSNGKST).

This sequence belongs to the MurCDEF family.

The protein resides in the cytoplasm. It catalyses the reaction UDP-N-acetyl-alpha-D-muramoyl-L-alanine + D-glutamate + ATP = UDP-N-acetyl-alpha-D-muramoyl-L-alanyl-D-glutamate + ADP + phosphate + H(+). It functions in the pathway cell wall biogenesis; peptidoglycan biosynthesis. In terms of biological role, cell wall formation. Catalyzes the addition of glutamate to the nucleotide precursor UDP-N-acetylmuramoyl-L-alanine (UMA). This is UDP-N-acetylmuramoylalanine--D-glutamate ligase from Aliivibrio salmonicida (strain LFI1238) (Vibrio salmonicida (strain LFI1238)).